The sequence spans 178 residues: MDKTDQTAIDESALVLNRTEKSAEAVLRVASMALSITGLVIMIKNSISNEFGSVSYSNIGAFMYLVSANGVCAAYSLLSALAILALPCPISKVQVRTLFLLDQVVTYVVLAAGAVSAETVYLAYYGNIPITWSSACDSYGSFCHNALISVVFTFVVSLLYMLLSLISSYRLFTRFEAP.

Residues 1–22 (MDKTDQTAIDESALVLNRTEKS) lie on the Cytoplasmic side of the membrane. The chain crosses the membrane as a helical span at residues 23 to 43 (AEAVLRVASMALSITGLVIMI). Over 44 to 69 (KNSISNEFGSVSYSNIGAFMYLVSAN) the chain is Extracellular. The helical transmembrane segment at 70–90 (GVCAAYSLLSALAILALPCPI) threads the bilayer. The Cytoplasmic portion of the chain corresponds to 91–96 (SKVQVR). The helical transmembrane segment at 97–117 (TLFLLDQVVTYVVLAAGAVSA) threads the bilayer. Residues 118 to 145 (ETVYLAYYGNIPITWSSACDSYGSFCHN) lie on the Extracellular side of the membrane. Residues 146 to 166 (ALISVVFTFVVSLLYMLLSLI) form a helical membrane-spanning segment. The Cytoplasmic portion of the chain corresponds to 167–178 (SSYRLFTRFEAP).

The protein belongs to the Casparian strip membrane proteins (CASP) family. As to quaternary structure, homodimer and heterodimers. In terms of tissue distribution, mostly expressed in flowers and buds and, to a lower extent, in roots and yellow siliques. Localized in the floral organ abscission zone.

The protein resides in the cell membrane. Its function is as follows. Involved in floral organ shedding. The chain is CASP-like protein 2A2 from Arabidopsis thaliana (Mouse-ear cress).